Here is a 436-residue protein sequence, read N- to C-terminus: Enolase (436 aa).

Substrate-binding residues include His-159 and Glu-168. Glu-211 (proton donor) is an active-site residue. Mg(2+) contacts are provided by Asp-246, Glu-295, and Asp-322. Positions 295 and 322 each coordinate substrate. Residue Lys-347 is the Proton acceptor of the active site. Residues 374–377 and Lys-398 each bind substrate; that span reads SHRS.

Belongs to the enolase family. As to quaternary structure, homodimer. Mg(2+) is required as a cofactor.

The protein resides in the cytoplasm. The catalysed reaction is (2R)-2-phosphoglycerate = phosphoenolpyruvate + H2O. It participates in carbohydrate degradation; glycolysis; pyruvate from D-glyceraldehyde 3-phosphate: step 4/5. This Neocallimastix frontalis (Rumen fungus) protein is Enolase.